We begin with the raw amino-acid sequence, 23 residues long: Phospholipase A2 crotoxin basic chain 3 (23 aa).

The cofactor is Ca(2+). Post-translationally, contains 7 disulfide bonds. Expressed by the venom gland.

Its subcellular location is the secreted. It carries out the reaction a 1,2-diacyl-sn-glycero-3-phosphocholine + H2O = a 1-acyl-sn-glycero-3-phosphocholine + a fatty acid + H(+). Functionally, snake venom phospholipase A2 (PLA2) that shows presynaptic neurotoxicity. PLA2 catalyzes the calcium-dependent hydrolysis of the 2-acyl groups in 3-sn-phosphoglycerides. The sequence is that of Phospholipase A2 crotoxin basic chain 3 from Crotalus durissus terrificus (South American rattlesnake).